The chain runs to 675 residues: Vitamin K-dependent protein S (675 aa).

Positions 1–24 (MRVLSVRFRVLLACLALVLPNSET) are cleaved as a signal peptide. The propeptide occupies 25-41 (NFLSKERASQVLVRKRR). Residues 42–87 (ANTLLEETKKGNLERECIEELCNKEEAREVFENNPETDYFYPKYLG) enclose the Gla domain. Residues E47, E48, E55, E57, E60, E61, E66, E67, E70, E73, and E77 each carry the 4-carboxyglutamate modification. A disulfide bridge connects residues C58 and C63. Positions 88-116 (CLGAFRVGAFSAARQSANAYPDLRSCVNA) are thrombin-sensitive. In terms of domain architecture, EGF-like 1 spans 117 to 155 (IPDQCDPMPCNEDGYLSCKDGQGAFTCICKPGWQGDKCQ). Intrachain disulfides connect C121/C134, C126/C143, C145/C154, C161/C175, C171/C184, C186/C199, C205/C217, C212/C226, C228/C241, C247/C256, C252/C265, C267/C282, and C449/C475. Residue D136 is modified to (3R)-3-hydroxyaspartate. The 44-residue stretch at 157-200 (DINECKDPSNINGGCSQTCDNTPGSYHCSCKIGFAMLTNKKDCK) folds into the EGF-like 2; calcium-binding domain. An EGF-like 3; calcium-binding domain is found at 201–242 (DVDECSLKPSVCGTAVCKNIPGDFECECPNGYRYDPSSKSCK). In terms of domain architecture, EGF-like 4; calcium-binding spans 243–283 (DVDECSENTCAQLCVNYPGGYSCYCDGKKGFKLAQDQRSCE). 2 Laminin G-like domains span residues 299–475 (LLYL…NKHC) and 484–665 (YYPG…AHSC). Residues N499 and N509 are each glycosylated (N-linked (GlcNAc...) asparagine).

In terms of processing, the iron and 2-oxoglutarate dependent 3-hydroxylation of aspartate and asparagine is (R) stereospecific within EGF domains. In terms of tissue distribution, plasma.

Its subcellular location is the secreted. In terms of biological role, anticoagulant plasma protein; it is a cofactor to activated protein C in the degradation of coagulation factors Va and VIIIa. It helps to prevent coagulation and stimulating fibrinolysis. The sequence is that of Vitamin K-dependent protein S (Pros1) from Rattus norvegicus (Rat).